The chain runs to 145 residues: DHIVSPHGFSYTSASLSPYVYAPYTYAASPYINPASVAVAPVNVATSYHAQDVIGQASYGHVDAYQAHHAVQDAAGNKVGSYSYVSPEGKVVKTNYVADATGFHVASNALPVGPTVVPAPVVDTPEVAAAKAAHLLEVEKVKGRV.

The 74-residue stretch at 41–114 (PVNVATSYHA…VASNALPVGP (74 aa)) folds into the Chitin-binding type R&amp;R domain.

The sequence is that of Cuticle protein 7 from Blaberus craniifer (Death's head cockroach).